A 337-amino-acid chain; its full sequence is Glyceraldehyde-3-phosphate dehydrogenase 3 (337 aa).

NAD(+) is bound by residues 12–13 and K80; that span reads RM. D-glyceraldehyde 3-phosphate-binding positions include 152–154 and T183; that span reads SCT. C153 acts as the Nucleophile in catalysis. N184 provides a ligand contact to NAD(+). D-glyceraldehyde 3-phosphate-binding positions include R198, 211 to 212, and R234; that span reads TG. Residue N317 coordinates NAD(+).

It belongs to the glyceraldehyde-3-phosphate dehydrogenase family. As to quaternary structure, homotetramer.

The protein resides in the cytoplasm. It catalyses the reaction D-glyceraldehyde 3-phosphate + phosphate + NAD(+) = (2R)-3-phospho-glyceroyl phosphate + NADH + H(+). It participates in carbohydrate degradation; glycolysis; pyruvate from D-glyceraldehyde 3-phosphate: step 1/5. Its pathway is carbohydrate biosynthesis; gluconeogenesis. Functionally, catalyzes the oxidative phosphorylation of glyceraldehyde 3-phosphate (G3P) to 1,3-bisphosphoglycerate (BPG) using the cofactor NAD. The first reaction step involves the formation of a hemiacetal intermediate between G3P and a cysteine residue, and this hemiacetal intermediate is then oxidized to a thioester, with concomitant reduction of NAD to NADH. The reduced NADH is then exchanged with the second NAD, and the thioester is attacked by a nucleophilic inorganic phosphate to produce BPG. The sequence is that of Glyceraldehyde-3-phosphate dehydrogenase 3 (gap3) from Nostoc sp. (strain PCC 7120 / SAG 25.82 / UTEX 2576).